A 142-amino-acid polypeptide reads, in one-letter code: Large ribosomal subunit protein uL11 (142 aa).

This sequence belongs to the universal ribosomal protein uL11 family. In terms of assembly, part of the ribosomal stalk of the 50S ribosomal subunit. Interacts with L10 and the large rRNA to form the base of the stalk. L10 forms an elongated spine to which L12 dimers bind in a sequential fashion forming a multimeric L10(L12)X complex. One or more lysine residues are methylated.

Functionally, forms part of the ribosomal stalk which helps the ribosome interact with GTP-bound translation factors. The chain is Large ribosomal subunit protein uL11 from Shewanella loihica (strain ATCC BAA-1088 / PV-4).